The sequence spans 304 residues: Carbonic anhydrase 5A, mitochondrial (304 aa).

The transit peptide at 1–34 (MLRAKMLGRGPYKPLAILRHMGPLCATRPQHWRF) directs the protein to the mitochondrion. Residues 35–295 (QHSYAEKHSN…LRGRNVRSSF (261 aa)) form the Alpha-carbonic anhydrase domain. The Zn(2+) site is built by H129, H131, and H154.

This sequence belongs to the alpha-carbonic anhydrase family. Zn(2+) serves as cofactor. In terms of tissue distribution, high in liver, also detected in heart, lung, kidney, spleen and intestine.

It is found in the mitochondrion. The catalysed reaction is hydrogencarbonate + H(+) = CO2 + H2O. Mitochondrial carbonic anhydrase that catalyzes the reversible conversion of carbon dioxide to bicarbonate/HCO3. Mitochondria are impermeable to HCO3, and thus this intramitochondrial carbonic anhydrase is pivotal in providing HCO3 for multiple mitochondrial enzymes that catalyze the formation of essential metabolites of intermediary metabolism in the urea and Krebs cycles. This is Carbonic anhydrase 5A, mitochondrial from Rattus norvegicus (Rat).